The following is a 364-amino-acid chain: DNA polymerase IV (364 aa).

The region spanning 14–198 (IIHIDMDAFF…LPIEKFHGVG (185 aa)) is the UmuC domain. Mg(2+) contacts are provided by aspartate 18 and aspartate 116. The active site involves glutamate 117.

The protein belongs to the DNA polymerase type-Y family. As to quaternary structure, monomer. It depends on Mg(2+) as a cofactor.

The protein resides in the cytoplasm. The catalysed reaction is DNA(n) + a 2'-deoxyribonucleoside 5'-triphosphate = DNA(n+1) + diphosphate. In terms of biological role, poorly processive, error-prone DNA polymerase involved in untargeted mutagenesis. Copies undamaged DNA at stalled replication forks, which arise in vivo from mismatched or misaligned primer ends. These misaligned primers can be extended by PolIV. Exhibits no 3'-5' exonuclease (proofreading) activity. May be involved in translesional synthesis, in conjunction with the beta clamp from PolIII. In Streptococcus agalactiae serotype Ia (strain ATCC 27591 / A909 / CDC SS700), this protein is DNA polymerase IV.